The primary structure comprises 341 residues: Dihydroorotate dehydrogenase (quinone) (341 aa).

Residues 61–65 (AGLDK) and T85 contribute to the FMN site. Residue K65 coordinates substrate. 110 to 114 (NRMGF) lines the substrate pocket. Residues N138 and N171 each contribute to the FMN site. N171 serves as a coordination point for substrate. S174 serves as the catalytic Nucleophile. N176 is a substrate binding site. The FMN site is built by K216 and T244. 245–246 (NT) provides a ligand contact to substrate. FMN is bound by residues G267, G296, and 317–318 (YS).

This sequence belongs to the dihydroorotate dehydrogenase family. Type 2 subfamily. As to quaternary structure, monomer. It depends on FMN as a cofactor.

It localises to the cell membrane. The catalysed reaction is (S)-dihydroorotate + a quinone = orotate + a quinol. The protein operates within pyrimidine metabolism; UMP biosynthesis via de novo pathway; orotate from (S)-dihydroorotate (quinone route): step 1/1. Catalyzes the conversion of dihydroorotate to orotate with quinone as electron acceptor. This is Dihydroorotate dehydrogenase (quinone) from Pseudomonas putida (strain GB-1).